Reading from the N-terminus, the 480-residue chain is Glutamate--tRNA ligase (480 aa).

Residues 21–31 (PSPTGYLHVGG) carry the 'HIGH' region motif. Positions 110, 112, 137, and 139 each coordinate Zn(2+). The 'KMSKS' region motif lies at 248–252 (KLSKR). Lys-251 is a binding site for ATP.

The protein belongs to the class-I aminoacyl-tRNA synthetase family. Glutamate--tRNA ligase type 1 subfamily. In terms of assembly, monomer. Requires Zn(2+) as cofactor.

It is found in the cytoplasm. It carries out the reaction tRNA(Glu) + L-glutamate + ATP = L-glutamyl-tRNA(Glu) + AMP + diphosphate. Functionally, catalyzes the attachment of glutamate to tRNA(Glu) in a two-step reaction: glutamate is first activated by ATP to form Glu-AMP and then transferred to the acceptor end of tRNA(Glu). The polypeptide is Glutamate--tRNA ligase (Haemophilus influenzae (strain 86-028NP)).